The sequence spans 98 residues: Acylphosphatase-1 (98 aa).

One can recognise an Acylphosphatase-like domain in the interval 8–98 (SVDYEVFGKV…LEHSTFSICK (91 aa)). Residues Arg-23 and Asn-41 contribute to the active site.

This sequence belongs to the acylphosphatase family.

The enzyme catalyses an acyl phosphate + H2O = a carboxylate + phosphate + H(+). The protein is Acylphosphatase-1 (acyp1) of Xenopus tropicalis (Western clawed frog).